The primary structure comprises 308 residues: tRNA dimethylallyltransferase (308 aa).

9-16 contacts ATP; that stretch reads GPTAVGKT. 11–16 is a binding site for substrate; that stretch reads TAVGKT. Residues 34–37 form an interaction with substrate tRNA region; it reads DSMQ.

Belongs to the IPP transferase family. In terms of assembly, monomer. The cofactor is Mg(2+).

It catalyses the reaction adenosine(37) in tRNA + dimethylallyl diphosphate = N(6)-dimethylallyladenosine(37) in tRNA + diphosphate. Its function is as follows. Catalyzes the transfer of a dimethylallyl group onto the adenine at position 37 in tRNAs that read codons beginning with uridine, leading to the formation of N6-(dimethylallyl)adenosine (i(6)A). The chain is tRNA dimethylallyltransferase from Lactobacillus delbrueckii subsp. bulgaricus (strain ATCC BAA-365 / Lb-18).